The primary structure comprises 571 residues: Proline--tRNA ligase (571 aa).

It belongs to the class-II aminoacyl-tRNA synthetase family. ProS type 1 subfamily. As to quaternary structure, homodimer.

Its subcellular location is the cytoplasm. It catalyses the reaction tRNA(Pro) + L-proline + ATP = L-prolyl-tRNA(Pro) + AMP + diphosphate. Catalyzes the attachment of proline to tRNA(Pro) in a two-step reaction: proline is first activated by ATP to form Pro-AMP and then transferred to the acceptor end of tRNA(Pro). As ProRS can inadvertently accommodate and process non-cognate amino acids such as alanine and cysteine, to avoid such errors it has two additional distinct editing activities against alanine. One activity is designated as 'pretransfer' editing and involves the tRNA(Pro)-independent hydrolysis of activated Ala-AMP. The other activity is designated 'posttransfer' editing and involves deacylation of mischarged Ala-tRNA(Pro). The misacylated Cys-tRNA(Pro) is not edited by ProRS. This Photobacterium profundum (strain SS9) protein is Proline--tRNA ligase.